Consider the following 377-residue polypeptide: Floricaula/leafy homolog (377 aa).

The span at 116–126 (RRRLDEEDPRR) shows a compositional bias: basic and acidic residues. Residues 116-190 (RRRLDEEDPR…RKKGQRKVVD (75 aa)) are disordered. Positions 131-141 (SGDNNTNTLDA) are enriched in polar residues. 3 DNA-binding regions span residues 206-210 (REHPF), 275-282 (NKPKMRHY), and 346-349 (YVPT).

It belongs to the FLO/LFY family. As to expression, in developing inflorescences, leaf primordia and very young leaves.

The protein localises to the nucleus. Its function is as follows. Probable transcription factor. This chain is Floricaula/leafy homolog (FL), found in Populus trichocarpa (Western balsam poplar).